Consider the following 542-residue polypeptide: GPI alpha-1,2-mannosyltransferase 3 (542 aa).

The interval 1 to 36 (MESQAADYNPASRNLHGSSGEMKLRRRKSRQYVSAQ) is disordered. The next 8 helical transmembrane spans lie at 52–72 (LVLF…TSFV), 125–145 (VQFL…VADI), 213–233 (LVAL…PLLF), 244–264 (HLTL…SLII), 304–324 (GFPV…FLAP), 327–347 (LHIL…LGHK), 351–371 (FIYP…AHLK), and 376–396 (AALS…GLVH). Asn-480 carries N-linked (GlcNAc...) asparagine glycosylation.

Belongs to the glycosyltransferase 22 family. PIGB subfamily.

The protein resides in the endoplasmic reticulum membrane. Its pathway is glycolipid biosynthesis; glycosylphosphatidylinositol-anchor biosynthesis. Functionally, alpha-1,2-mannosyltransferase that catalyzes the transfer of the third mannose, via an alpha-1,2 bond, from a dolichol-phosphate-mannose (Dol-P-Man) to an alpha-D-Man-(1-&gt;6)-2-PEtn-alpha-D-Man-(1-&gt;4)-alpha-D-GlcN-(1-&gt;6)-(1-radyl,2-acyl-sn-glycero-3-phospho)-2-acyl-inositol intermediate to generate an alpha-D-Man-(1-&gt;2)-alpha-D-Man-(1-&gt;6)-2-PEtn-alpha-D-Man-(1-&gt;4)-alpha-D-GlcN-(1-&gt;6)-(1-radyl,2-acyl-sn-glycero-3-phospho)-2-acyl-inositol (also termed H6) and participates in the nineth step of the glycosylphosphatidylinositol-anchor biosynthesis. May also add the third mannose to an alpha-D-Man-(1-&gt;6)-alpha-D-Man-(1-&gt;4)-alpha-D-GlcN-(1-&gt;6)-(1-radyl,2-acyl-sn-glycero-3-phospho)-2-acyl-inositol (also termed H3) intermediate generating an alpha-D-Man-(1-&gt;2)-alpha-D-Man-(1-&gt;6)-alpha-D-Man-(1-&gt;4)-alpha-D-GlcN-(1-&gt;6)-(1-radyl,2-acyl-sn-glycero-3-phospho)-2-acyl-inositol (also termed H4). The protein is GPI alpha-1,2-mannosyltransferase 3 of Mus musculus (Mouse).